Reading from the N-terminus, the 175-residue chain is Methylmalonyl-CoA epimerase, mitochondrial (175 aa).

Residues 1–35 (MARVLKVAAASAAGLFPRLRTPVSTVRTSASLSSH) constitute a mitochondrion transit peptide. Residues 46 to 175 (RLNHVAVAVP…GGVLVELEQA (130 aa)) enclose the VOC domain. His-49 serves as a coordination point for Co(2+). Lys-113 carries the N6-succinyllysine modification. His-121 contacts Co(2+). Residue Lys-149 is modified to N6-acetyllysine; alternate. Position 149 is an N6-succinyllysine; alternate (Lys-149). Glu-171 lines the Co(2+) pocket.

The protein belongs to the methylmalonyl-CoA epimerase family.

It is found in the mitochondrion. It catalyses the reaction (R)-methylmalonyl-CoA = (S)-methylmalonyl-CoA. In terms of biological role, methylmalonyl-CoA epimerase involved in propionyl-CoA metabolism. This chain is Methylmalonyl-CoA epimerase, mitochondrial (MCEE), found in Bos taurus (Bovine).